We begin with the raw amino-acid sequence, 259 residues long: Ribonuclease PH (259 aa).

Phosphate-binding positions include Arg-88 and 126–128 (GTR).

This sequence belongs to the RNase PH family. As to quaternary structure, homohexameric ring arranged as a trimer of dimers.

It catalyses the reaction tRNA(n+1) + phosphate = tRNA(n) + a ribonucleoside 5'-diphosphate. Its function is as follows. Phosphorolytic 3'-5' exoribonuclease that plays an important role in tRNA 3'-end maturation. Removes nucleotide residues following the 3'-CCA terminus of tRNAs; can also add nucleotides to the ends of RNA molecules by using nucleoside diphosphates as substrates, but this may not be physiologically important. Probably plays a role in initiation of 16S rRNA degradation (leading to ribosome degradation) during starvation. This chain is Ribonuclease PH, found in Mycobacterium bovis (strain ATCC BAA-935 / AF2122/97).